The primary structure comprises 430 residues: Glycine reductase complex component B subunits alpha and beta (430 aa).

The Schiff-base intermediate with substrate; via pyruvic acid role is filled by cysteine 242. Residue cysteine 242 is modified to Pyruvic acid (Cys).

As to quaternary structure, heterohexamer of two alpha, two beta and two gamma subunits. Component of the glycine reductase complex, together with components A and C. PB is substrate specific. The peptide chain is cleaved into beta and alpha chains, and the alpha chain N-terminal cysteine is deaminated and oxidized to form a reactive pyruvoyl group.

The catalysed reaction is acetyl phosphate + [thioredoxin]-disulfide + NH4(+) + H2O = [thioredoxin]-dithiol + glycine + phosphate + H(+). In terms of biological role, in the first step of glycine reductase, the substrate is bound to component PB via a Schiff base intermediate. Then the PB-activated substrate is nucleophilically attacked by the selenol anion of component PA to transform it to a carboxymethylated selenoether and the respective amine. By action of component PC, acetyl phosphate is formed, leaving component PA in its oxidized state. Finally component PA becomes reduced by the thioredoxin system to start a new catalytic cycle of reductive deamination. The protein is Glycine reductase complex component B subunits alpha and beta (grdE) of Acetoanaerobium sticklandii (strain ATCC 12662 / DSM 519 / JCM 1433 / CCUG 9281 / NCIMB 10654 / HF) (Clostridium sticklandii).